A 76-amino-acid polypeptide reads, in one-letter code: Putative small nuclear ribonucleoprotein G-like protein 15 (76 aa).

Positions 4–76 (AHPPELKKFT…IIMLEALERV (73 aa)) constitute a Sm domain.

This sequence belongs to the snRNP Sm proteins family.

The protein localises to the nucleus. Functionally, associated with snRNP U1, U2, U4/U6 and U5. This Homo sapiens (Human) protein is Putative small nuclear ribonucleoprotein G-like protein 15 (SNRPGP15).